A 180-amino-acid chain; its full sequence is ADP-ribosylation factor 4 (180 aa).

The N-myristoyl glycine moiety is linked to residue glycine 2. GTP contacts are provided by residues 24–31, 67–71, and 126–129; these read GLDAAGKT, DVGGQ, and NKQD. Serine 147 bears the Phosphoserine mark.

The protein belongs to the small GTPase superfamily. Arf family. In terms of assembly, forms a complex containing RAB11A, ASAP1, RAB3IP, RAP11FIP3 and ARF4; the complex promotes preciliary trafficking; the complex binds to RHO in photoreceptor cells and promotes RHO ciliary transport.

The protein resides in the golgi apparatus. Its subcellular location is the membrane. In terms of biological role, GTP-binding protein that functions as an allosteric activator of the cholera toxin catalytic subunit, an ADP-ribosyltransferase. Involved in protein trafficking; may modulate vesicle budding and uncoating within the Golgi apparatus. Part of the ciliary targeting complex containing Rab11, ASAP1, Rabin8/RAB3IP, RAB11FIP3 and ARF4, which direct preciliary vesicle trafficking to mother centriole and ciliogenesis initiation. The chain is ADP-ribosylation factor 4 (ARF4) from Homo sapiens (Human).